Reading from the N-terminus, the 132-residue chain is CLAVATA3/ESR (CLE)-related protein 2-B (132 aa).

Positions 1–26 are cleaved as a signal peptide; sequence MASRMGMVAILSLFVCALVASTSVNA. Residues 68-132 are disordered; that stretch reads NRASKQLDRE…IGPPPFLDRY (65 aa). 2 positions are modified to hydroxyproline: P82 and P85. O-linked (Ara...) hydroxyproline glycosylation occurs at P85.

Belongs to the CLV3/ESR signal peptide family. Post-translationally, the O-glycosylation (arabinosylation) of the hydroxyproline Pro-85 enhances binding affinity of the ESR2Bp peptide for its receptor. Seed endosperm.

Its subcellular location is the secreted. The protein localises to the extracellular space. Extracellular signal peptide that regulates cell fate. This chain is CLAVATA3/ESR (CLE)-related protein 2-B, found in Zea mays (Maize).